A 299-amino-acid polypeptide reads, in one-letter code: Lipoyl synthase (299 aa).

7 residues coordinate [4Fe-4S] cluster: C45, C50, C56, C71, C75, C78, and S284. The Radical SAM core domain occupies 57-273; it reads YSKGTATFMI…GDVALAKDFL (217 aa).

This sequence belongs to the radical SAM superfamily. Lipoyl synthase family. It depends on [4Fe-4S] cluster as a cofactor.

The protein localises to the cytoplasm. It carries out the reaction [[Fe-S] cluster scaffold protein carrying a second [4Fe-4S](2+) cluster] + N(6)-octanoyl-L-lysyl-[protein] + 2 oxidized [2Fe-2S]-[ferredoxin] + 2 S-adenosyl-L-methionine + 4 H(+) = [[Fe-S] cluster scaffold protein] + N(6)-[(R)-dihydrolipoyl]-L-lysyl-[protein] + 4 Fe(3+) + 2 hydrogen sulfide + 2 5'-deoxyadenosine + 2 L-methionine + 2 reduced [2Fe-2S]-[ferredoxin]. It participates in protein modification; protein lipoylation via endogenous pathway; protein N(6)-(lipoyl)lysine from octanoyl-[acyl-carrier-protein]: step 2/2. In terms of biological role, catalyzes the radical-mediated insertion of two sulfur atoms into the C-6 and C-8 positions of the octanoyl moiety bound to the lipoyl domains of lipoate-dependent enzymes, thereby converting the octanoylated domains into lipoylated derivatives. The sequence is that of Lipoyl synthase from Desulfotalea psychrophila (strain LSv54 / DSM 12343).